We begin with the raw amino-acid sequence, 204 residues long: MKKLTSQISLFDHETGQLVAGVDEVGRGPLAGPVVAAAVILNPEKPIEGLNDSKKLSHRQRVALSQEIREKALAWATGWATVEEIDQINILQASLLAMQRAVAGLQVAPDLALIDGNKIPKLDMPAEAIVKGDSKVAAIAAASILAKVERDEELDRLDVIFPGYGLAGHKGYPTAQHLSALRELGVTDIHRRSYKPVQQLLQGD.

The 188-residue stretch at 17 to 204 folds into the RNase H type-2 domain; sequence QLVAGVDEVG…KPVQQLLQGD (188 aa). D23, E24, and D115 together coordinate a divalent metal cation.

This sequence belongs to the RNase HII family. Mn(2+) is required as a cofactor. It depends on Mg(2+) as a cofactor.

The protein localises to the cytoplasm. The enzyme catalyses Endonucleolytic cleavage to 5'-phosphomonoester.. Its function is as follows. Endonuclease that specifically degrades the RNA of RNA-DNA hybrids. This is Ribonuclease HII from Hahella chejuensis (strain KCTC 2396).